A 189-amino-acid polypeptide reads, in one-letter code: Cell division protein SepF (189 aa).

Disordered stretches follow at residues 1 to 75 and 155 to 174; these read MEGQ…GLPG and STPS…SPTP.

The protein belongs to the SepF family. In terms of assembly, homodimer. Interacts with FtsZ.

It is found in the cytoplasm. Cell division protein that is part of the divisome complex and is recruited early to the Z-ring. Probably stimulates Z-ring formation, perhaps through the cross-linking of FtsZ protofilaments. Its function overlaps with FtsA. This is Cell division protein SepF from Synechococcus sp. (strain JA-3-3Ab) (Cyanobacteria bacterium Yellowstone A-Prime).